The sequence spans 189 residues: MKKIVLYGGQFNPIHTAHMIVASEVFHELQPDEFYFLPSFMSPLKKHNNFIDVQHRLTMIQMIIDELGFGDICDDEIKRGGQSYTYDTIKAFKEQHKDSELYFVIGTDQYNQLEKWYQIEYLKEMVTFVVVNRDKNSQNVENAMIAIQIPRVDISSTMIRQRVSEGKSIQVLVPKSVENYIKGEGLYEH.

Belongs to the NadD family.

It catalyses the reaction nicotinate beta-D-ribonucleotide + ATP + H(+) = deamido-NAD(+) + diphosphate. It functions in the pathway cofactor biosynthesis; NAD(+) biosynthesis; deamido-NAD(+) from nicotinate D-ribonucleotide: step 1/1. Its function is as follows. Catalyzes the reversible adenylation of nicotinate mononucleotide (NaMN) to nicotinic acid adenine dinucleotide (NaAD). The sequence is that of Probable nicotinate-nucleotide adenylyltransferase from Staphylococcus aureus (strain N315).